Here is a 332-residue protein sequence, read N- to C-terminus: 3-dehydroquinate synthase (332 aa).

NAD(+) contacts are provided by residues 55-60, 89-93, 113-114, Lys-126, Lys-134, and 152-155; these read DGEEYK, GVITD, TT, and TLST. Residues Glu-167, His-226, and His-242 each coordinate Zn(2+).

Belongs to the sugar phosphate cyclases superfamily. Dehydroquinate synthase family. Requires NAD(+) as cofactor. It depends on Co(2+) as a cofactor. The cofactor is Zn(2+).

It localises to the cytoplasm. It catalyses the reaction 7-phospho-2-dehydro-3-deoxy-D-arabino-heptonate = 3-dehydroquinate + phosphate. Its pathway is metabolic intermediate biosynthesis; chorismate biosynthesis; chorismate from D-erythrose 4-phosphate and phosphoenolpyruvate: step 2/7. Catalyzes the conversion of 3-deoxy-D-arabino-heptulosonate 7-phosphate (DAHP) to dehydroquinate (DHQ). The protein is 3-dehydroquinate synthase of Pyrococcus abyssi (strain GE5 / Orsay).